We begin with the raw amino-acid sequence, 459 residues long: ATP-dependent protease ATPase subunit HslU (459 aa).

Residues valine 26, 68–73, aspartate 271, glutamate 337, and arginine 409 contribute to the ATP site; that span reads GVGKTE.

This sequence belongs to the ClpX chaperone family. HslU subfamily. A double ring-shaped homohexamer of HslV is capped on each side by a ring-shaped HslU homohexamer. The assembly of the HslU/HslV complex is dependent on binding of ATP.

Its subcellular location is the cytoplasm. In terms of biological role, ATPase subunit of a proteasome-like degradation complex; this subunit has chaperone activity. The binding of ATP and its subsequent hydrolysis by HslU are essential for unfolding of protein substrates subsequently hydrolyzed by HslV. HslU recognizes the N-terminal part of its protein substrates and unfolds these before they are guided to HslV for hydrolysis. The sequence is that of ATP-dependent protease ATPase subunit HslU from Xylella fastidiosa (strain M12).